The following is a 1180-amino-acid chain: MRKFTLSLMHAFLPAGGRNALPGKRGVSRALLGLSLGMALTPLAGAATSAQQQLLEQVRLGEATHREDLVRQSLYRLELIDPNDPQVIAARFRYLLRQGDSDGAQKLLDRLAQLAPESTAYQSSRTAMLLSTPQGRQSLQEARLLATTGHTEQAIASYDKLFKGYPPEGELAVEYWTTVAKLPARRHEAINQLQKINAVSPGNNALQNALAQLLFASGRRDEGFAVLKQMAKSSTGRSAASAIWYQQIKDLPVSDASVKALQDYLTQFSEGDSVSAARAQLSEQQKQLADPAFRARSQGIAAVNAGEGGKAIAQLQQAVSARQDDSEAVGALGQAYSQRGDRARAVAQFEKALAMAPHSSSRDKWESLLKVNRYWLLIQQGDAALKANNLAQAERFYQQARAVDNTDSYAVLGLGDVAMARKDNAAAERYYQQTLRMDSGNTNAVRGLANLYRQQSPQKAAAFIASLSASQRRSIDDIERSLENDRLAQQAETLESEGKWAQAAELHRRRLALDPGSVWVTYRLSRDLWQAGQHAQADAQMRSLAQQKPNDPEQVYAYGLYLSGSDRDRAALAHLNTLPTSQWNSNIQELAGRLQSNQVLESANRLRDSGKEREAEALLRQQPPSTRIALTLADWAQQRGDNAAARAAYDAVLAREPGNVDAMLGRVEIDIAQGDNAAARAQLAALPASQITSINMQRRVALAQLQLGDITAAARTFNRITPQAKAQPPSMESAMVLRDAAAFQAQTGEPQRALETYKDAMVAAAITPVRPQDNDTFTRLTRNDEKDDWLKRGVRSDAAELYRQQDLNVTLAHDYWGSSGTGGYSDLKAHTTMLQVDAPWSDGRAFFRTDMVNMDVGRFSTDADGKYDNNWGTCTLEKCSGHRSQADTGASVAVGWQNETWRWDIGTTPMGFNVVDVVGGVSYSDDIGPLGYTLNAHRRPISSSLLAFGGQKDASSNTGTKWGGVRANGGGVSLSYDKGEANGVWASLSGDQLSGKNVEDNWRVRWMTGYYYKVINENNRRVTVGLNNMIWHYDKDLSGYSLGQGGYYSPQEYLSFAVPVMWRQRTENWSWELGGSVSWSHSRNRTMPRYPLMNLIPADYQEDARDQTNGGGSSQGFGYTARALIERRVTANWFVGTAVDIQQAKDYTPSHLLLYVRYSAAGWQGDMDLPPQPLVPYADW.

The signal sequence occupies residues 1 to 45; sequence MRKFTLSLMHAFLPAGGRNALPGKRGVSRALLGLSLGMALTPLAG. TPR repeat units lie at residues 85–118, 135–168, 292–325, 326–359, 374–407, 408–441, 484–517, 626–659, 694–727, and 734–767; these read PQVI…APES, GRQS…YPPE, AFRA…RQDD, SEAV…APHS, YWLL…DNTD, SYAV…DSGN, NDRL…DPGS, TRIA…EPGN, INMQ…AKAQ, and AMVL…AAIT.

This sequence belongs to the AcsC/BcsC family.

Its pathway is glycan metabolism; bacterial cellulose biosynthesis. Required for maximal bacterial cellulose synthesis. This Salmonella typhimurium (strain LT2 / SGSC1412 / ATCC 700720) protein is Cellulose synthase operon protein C (bcsC).